The primary structure comprises 376 residues: Chaperone protein DnaJ (376 aa).

Residues 5-69 enclose the J domain; the sequence is DYYEILGVDR…EKRARYDRFG (65 aa). The CR-type zinc-finger motif lies at 135–217; that stretch reads GLETDIRVPH…CNGKGVVRKT (83 aa). Residues Cys-148, Cys-151, Cys-165, Cys-168, Cys-191, Cys-194, Cys-205, and Cys-208 each contribute to the Zn(2+) site. CXXCXGXG motif repeat units follow at residues 148-155, 165-172, 191-198, and 205-212; these read CPVCHGSR, CQTCGGSG, CPDCQGEG, and CSNCNGKG.

Belongs to the DnaJ family. Homodimer. Zn(2+) is required as a cofactor.

The protein resides in the cytoplasm. In terms of biological role, participates actively in the response to hyperosmotic and heat shock by preventing the aggregation of stress-denatured proteins and by disaggregating proteins, also in an autonomous, DnaK-independent fashion. Unfolded proteins bind initially to DnaJ; upon interaction with the DnaJ-bound protein, DnaK hydrolyzes its bound ATP, resulting in the formation of a stable complex. GrpE releases ADP from DnaK; ATP binding to DnaK triggers the release of the substrate protein, thus completing the reaction cycle. Several rounds of ATP-dependent interactions between DnaJ, DnaK and GrpE are required for fully efficient folding. Also involved, together with DnaK and GrpE, in the DNA replication of plasmids through activation of initiation proteins. In Methanothermobacter thermautotrophicus (strain ATCC 29096 / DSM 1053 / JCM 10044 / NBRC 100330 / Delta H) (Methanobacterium thermoautotrophicum), this protein is Chaperone protein DnaJ.